A 254-amino-acid chain; its full sequence is Anamorsin homolog (254 aa).

An N-terminal SAM-like domain region spans residues 4–133; it reads VQENNHVLYL…EVGSKSKLSF (130 aa). The interval 134–165 is linker; that stretch reads AKKSNVAAVWKLDDNEEEERIDDEELLDEDDK. Positions 176, 185, 188, and 190 each coordinate [2Fe-2S] cluster. The tract at residues 176–190 is fe-S binding site A; the sequence is CGTTGKRKACKDCSC. Residues cysteine 215, cysteine 218, cysteine 226, and cysteine 229 each contribute to the [4Fe-4S] cluster site. 2 short sequence motifs (cx2C motif) span residues 215-218 and 226-229; these read CGSC and CATC. The segment at 215–229 is fe-S binding site B; sequence CGSCYLGDAFRCATC.

It belongs to the anamorsin family. Monomer. [2Fe-2S] cluster serves as cofactor. The cofactor is [4Fe-4S] cluster.

It is found in the cytoplasm. The protein localises to the mitochondrion intermembrane space. In terms of biological role, component of the cytosolic iron-sulfur (Fe-S) protein assembly (CIA) machinery. Required for the maturation of extramitochondrial Fe-S proteins. Part of an electron transfer chain functioning in an early step of cytosolic Fe-S biogenesis, facilitating the de novo assembly of a [4Fe-4S] cluster on the cytosolic Fe-S scaffold complex. Electrons are transferred from NADPH via a FAD- and FMN-containing diflavin oxidoreductase. Together with the diflavin oxidoreductase, also required for the assembly of the diferric tyrosyl radical cofactor of ribonucleotide reductase (RNR), probably by providing electrons for reduction during radical cofactor maturation in the catalytic small subunit. The sequence is that of Anamorsin homolog from Anopheles gambiae (African malaria mosquito).